The primary structure comprises 270 residues: Putative phosphoenolpyruvate synthase regulatory protein (270 aa).

An ADP-binding site is contributed by 150–157 (GVSRCGKT).

The protein belongs to the pyruvate, phosphate/water dikinase regulatory protein family. PSRP subfamily.

It catalyses the reaction [pyruvate, water dikinase] + ADP = [pyruvate, water dikinase]-phosphate + AMP + H(+). The enzyme catalyses [pyruvate, water dikinase]-phosphate + phosphate + H(+) = [pyruvate, water dikinase] + diphosphate. Functionally, bifunctional serine/threonine kinase and phosphorylase involved in the regulation of the phosphoenolpyruvate synthase (PEPS) by catalyzing its phosphorylation/dephosphorylation. This Shewanella baltica (strain OS223) protein is Putative phosphoenolpyruvate synthase regulatory protein.